A 156-amino-acid chain; its full sequence is Small ribosomal subunit protein uS7 (156 aa).

Belongs to the universal ribosomal protein uS7 family. In terms of assembly, part of the 30S ribosomal subunit. Contacts proteins S9 and S11.

Its function is as follows. One of the primary rRNA binding proteins, it binds directly to 16S rRNA where it nucleates assembly of the head domain of the 30S subunit. Is located at the subunit interface close to the decoding center, probably blocks exit of the E-site tRNA. The chain is Small ribosomal subunit protein uS7 from Methylococcus capsulatus (strain ATCC 33009 / NCIMB 11132 / Bath).